A 456-amino-acid polypeptide reads, in one-letter code: GTPase Der (456 aa).

EngA-type G domains lie at 4–169 (PIVA…PAVE) and 177–352 (IKVA…ESHK). GTP is bound by residues 10-17 (GRPNVGKS), 57-61 (DTGGL), 120-123 (NKCE), 183-190 (GRPNVGKS), 230-234 (DTAGI), and 295-298 (NKWD). In terms of domain architecture, KH-like spans 353-438 (RRVSTSVINE…PIILLWRSKK (86 aa)).

This sequence belongs to the TRAFAC class TrmE-Era-EngA-EngB-Septin-like GTPase superfamily. EngA (Der) GTPase family. In terms of assembly, associates with the 50S ribosomal subunit.

In terms of biological role, GTPase that plays an essential role in the late steps of ribosome biogenesis. This chain is GTPase Der, found in Nostoc punctiforme (strain ATCC 29133 / PCC 73102).